The primary structure comprises 119 residues: Ribonuclease P protein component (119 aa).

The protein belongs to the RnpA family. As to quaternary structure, consists of a catalytic RNA component (M1 or rnpB) and a protein subunit.

The enzyme catalyses Endonucleolytic cleavage of RNA, removing 5'-extranucleotides from tRNA precursor.. In terms of biological role, RNaseP catalyzes the removal of the 5'-leader sequence from pre-tRNA to produce the mature 5'-terminus. It can also cleave other RNA substrates such as 4.5S RNA. The protein component plays an auxiliary but essential role in vivo by binding to the 5'-leader sequence and broadening the substrate specificity of the ribozyme. This is Ribonuclease P protein component from Escherichia coli O6:H1 (strain CFT073 / ATCC 700928 / UPEC).